We begin with the raw amino-acid sequence, 260 residues long: Coiled-coil domain-containing protein 127 (260 aa).

A coiled-coil region spans residues 49–135 (QKEVEKEREA…QVMQEKRQVQ (87 aa)).

The polypeptide is Coiled-coil domain-containing protein 127 (CCDC127) (Homo sapiens (Human)).